The chain runs to 612 residues: Putative zinc metalloproteinase C607.06c (612 aa).

H303 serves as a coordination point for Zn(2+). Residue E304 is part of the active site. Zn(2+) is bound by residues H307 and H313. A Jacalin-type lectin domain is found at 477 to 612 (VYRSERYGLR…FMDSIGFFIK (136 aa)).

The protein belongs to the peptidase M10B family. Requires Zn(2+) as cofactor.

This Schizosaccharomyces pombe (strain 972 / ATCC 24843) (Fission yeast) protein is Putative zinc metalloproteinase C607.06c.